A 252-amino-acid polypeptide reads, in one-letter code: Protein TRANSPARENT TESTA 16 (252 aa).

The 61-residue stretch at 1-61 (MGRGKIEIKK…GKLSEFCSEQ (61 aa)) folds into the MADS-box domain. One can recognise a K-box domain in the interval 86–176 (QEQLHHEMEL…YRWLHEHRAA (91 aa)). Residues 121-174 (NELDGLERQLEHSVLKVRERKNELMQQQLENLSRKRRMLEEDNNNMYRWLHEHR) are a coiled coil.

In terms of assembly, interacts with AP1/AGL7, SEP1/AGL2, SEP2/AGL4, SEP3/AGL9 and AGL3/SEP4. As to expression, expressed in buds, flowers and immature seeds, but not in roots, stems, leaves, seedlings or siliques valves. Expression in seed coat is confined to the endothelium layer.

Its subcellular location is the nucleus. Its function is as follows. Transcription factor involved in the developmental regulation of the endothelium and in the accumulation of proanthocyanidins (PAs) or condensed tannins which give the seed its brown pigmentation after oxidation. Necessary for the normal activation of the BANYULS promoter in the endothelium body. Is required, together with AGL11/STK for the maternal control of endothelium formation, which is essential for female gametophyte development and fertilization, and seed formation. Interacts genetically with AGL1/SHP1 and AGL5/SHP2 in a partially antagonistic manner and represses AGL1/SHP1, AGL5/SHP2, and AGL8/FUL during flower development. Is essential for the coordination of cell divisions in ovule, seed coat development and endosperm formation. Mediates the crosstalk between endothelium and nucellus to ensure proper seed formation. Functions redundantly with AGL63/GOA to repress nucellus growth and promote its degeneration. Represses the negative regulator of autophagy and programmed cell death HVA22D in the proximal nucellus. Binds specifically to the CArG box DNA sequence 5'-CC (A/T)6 GG-3'. The sequence is that of Protein TRANSPARENT TESTA 16 (TT16) from Arabidopsis thaliana (Mouse-ear cress).